The sequence spans 466 residues: MVLLSENASEGSNCTHPPAPVNISKAILLGVILGGLIIFGVLGNILVILSVACHRHLHSVTHYYIVNLAVADLLLTSTVLPFSAIFEILGYWAFGRVFCNIWAAVDVLCCTASIMGLCIISIDRYIGVSYPLRYPTIVTQRRGVRALLCVWVLSLVISIGPLFGWRQPAPEDETICQINEEPGYVLFSALGSFYVPLAIILVMYCRVYVVAKRESRGLKSGLKTDKSDSEQVTLRIHRKNVPAEGGGVSSAKNKTHFSVRLLKFSREKKAAKTLGIVVGCFVLCWLPFFLVMPIGSFFPDFKPSETVFKIVFWLGYLNSCINPIIYPCSSQEFKKAFQNVLRIQCLRRRQSSKHALGYTLHPPSQALEGQHRDMVRIPVGSGETFYKISKTDGVCEWKFFSSMPQGSARITVPKDQSACTTARVRSKSFLQVCCCVGSSAPRPEENHQVPTIKIHTISLGENGEEV.

Over 1–27 (MVLLSENASEGSNCTHPPAPVNISKAI) the chain is Extracellular. N-linked (GlcNAc...) asparagine glycosylation is found at Asn7, Asn13, and Asn22. A helical transmembrane segment spans residues 28–51 (LLGVILGGLIIFGVLGNILVILSV). The Cytoplasmic portion of the chain corresponds to 52–64 (ACHRHLHSVTHYY). The helical transmembrane segment at 65–88 (IVNLAVADLLLTSTVLPFSAIFEI) threads the bilayer. The Extracellular portion of the chain corresponds to 89-99 (LGYWAFGRVFC). A disulfide bridge links Cys99 with Cys176. A helical membrane pass occupies residues 100–122 (NIWAAVDVLCCTASIMGLCIISI). The Cytoplasmic portion of the chain corresponds to 123–143 (DRYIGVSYPLRYPTIVTQRRG). The chain crosses the membrane as a helical span at residues 144–167 (VRALLCVWVLSLVISIGPLFGWRQ). Topologically, residues 168 to 181 (PAPEDETICQINEE) are extracellular. A helical transmembrane segment spans residues 182-205 (PGYVLFSALGSFYVPLAIILVMYC). The Cytoplasmic portion of the chain corresponds to 206–273 (RVYVVAKRES…FSREKKAAKT (68 aa)). A Phosphoserine; by PKA modification is found at Ser215. The helical transmembrane segment at 274–297 (LGIVVGCFVLCWLPFFLVMPIGSF) threads the bilayer. At 298 to 305 (FPDFKPSE) the chain is on the extracellular side. A helical membrane pass occupies residues 306-329 (TVFKIVFWLGYLNSCINPIIYPCS). Topologically, residues 330-466 (SQEFKKAFQN…ISLGENGEEV (137 aa)) are cytoplasmic. The Nuclear localization signal motif lies at 334–349 (KKAFQNVLRIQCLRRR). Cys345 carries the S-palmitoyl cysteine lipid modification.

This sequence belongs to the G-protein coupled receptor 1 family. Adrenergic receptor subfamily. ADRA1A sub-subfamily. In terms of assembly, homo- and heterooligomer. Heterooligomerizes with ADRA1B homooligomers in cardiac myocytes. Interacts with CAVIN4. C-terminal Ser or Thr residues may be phosphorylated. Abundant in heart, brain, aorta, vena cava, vas deferens, submaxillary gland, lung, and kidney. Found at lower levels in prostate, parotid gland and skeletal muscle.

It localises to the nucleus membrane. It is found in the cell membrane. The protein resides in the cytoplasm. The protein localises to the membrane. Its subcellular location is the caveola. Functionally, this alpha-adrenergic receptor mediates its action by association with G proteins that activate a phosphatidylinositol-calcium second messenger system. Its effect is mediated by G(q) and G(11) proteins. Nuclear ADRA1A-ADRA1B heterooligomers regulate phenylephrine (PE)-stimulated ERK signaling in cardiac myocytes. This Rattus norvegicus (Rat) protein is Alpha-1A adrenergic receptor (Adra1a).